We begin with the raw amino-acid sequence, 629 residues long: uncharacterized protein (629 aa).

At methionine 1 the chain carries N-acetylmethionine. A disordered region spans residues 308-395 (VDPEPEPDPP…PGRRSRARNA (88 aa)). A compositionally biased stretch (polar residues) spans 322 to 334 (SANEPASQPNSRS). Residues 451–587 (LVIFVVDASG…VAEGAAAVVV (137 aa)) form the VWFA domain.

Belongs to the Mg-chelatase subunits D/I family.

This is an uncharacterized protein from Mycobacterium tuberculosis (strain ATCC 25618 / H37Rv).